The following is a 138-amino-acid chain: uncharacterized protein (138 aa).

The H-T-H motif DNA-binding region spans 17 to 38 (LCRNDVAHEAGTNNVQIMRIEK).

This is an uncharacterized protein from Herpetosiphon aurantiacus (Herpetosiphon giganteus).